The primary structure comprises 444 residues: MTKKHYICSNCGNISPKWSGQCFDCGVWGSIVEEIISTNQVIVKVGSKQDFDKLSGHVTEQLRIPTPIGEFNRVLGGGLVLGSAILIGGDPGIGKSTLLLQLAASNFASKMNCLYITGEESLDQIKLRAIRLNLTNYNTDILAATNLENIIASIEANKNNIDLIVIDSIQTITTKELSSPPGTVSQIRTCANELVNYAKQNNIIILLSCHVTKDGQLAGPKILEHLVDTVLYFEGDHNNHFRILRSYKNRFGGVGEIGVFEMSGSGLIEVTNPSELFLMQREQNVIGTSIFAGIEGSRPLLMEVQALMVPSNMVTPRRSAVGWDANRLSMILAVLSSRIGLNLANYEVYLSIAGGLKIADPASDLAVTASLISAATGNPVPEHSVFFGEISLSGEIRKTAKAETRIKEAVKLGFNKIICSKFENLTYDFISSVSHLKDLKEIIK.

The segment at 8–25 (CSNCGNISPKWSGQCFDC) adopts a C4-type zinc-finger fold. 89-96 (GDPGIGKS) is a binding site for ATP. The RadA KNRFG motif signature appears at 248–252 (KNRFG). The lon-protease-like stretch occupies residues 347–444 (EVYLSIAGGL…HLKDLKEIIK (98 aa)).

This sequence belongs to the RecA family. RadA subfamily.

Its function is as follows. DNA-dependent ATPase involved in processing of recombination intermediates, plays a role in repairing DNA breaks. Stimulates the branch migration of RecA-mediated strand transfer reactions, allowing the 3' invading strand to extend heteroduplex DNA faster. Binds ssDNA in the presence of ADP but not other nucleotides, has ATPase activity that is stimulated by ssDNA and various branched DNA structures, but inhibited by SSB. Does not have RecA's homology-searching function. The polypeptide is DNA repair protein RadA (Rickettsia conorii (strain ATCC VR-613 / Malish 7)).